The following is a 289-amino-acid chain: Ribosomal RNA small subunit methyltransferase A (289 aa).

Residues asparagine 21, leucine 23, glycine 48, glutamate 69, aspartate 94, and asparagine 120 each contribute to the S-adenosyl-L-methionine site.

Belongs to the class I-like SAM-binding methyltransferase superfamily. rRNA adenine N(6)-methyltransferase family. RsmA subfamily.

Its subcellular location is the cytoplasm. The enzyme catalyses adenosine(1518)/adenosine(1519) in 16S rRNA + 4 S-adenosyl-L-methionine = N(6)-dimethyladenosine(1518)/N(6)-dimethyladenosine(1519) in 16S rRNA + 4 S-adenosyl-L-homocysteine + 4 H(+). Specifically dimethylates two adjacent adenosines (A1518 and A1519) in the loop of a conserved hairpin near the 3'-end of 16S rRNA in the 30S particle. May play a critical role in biogenesis of 30S subunits. In Haemophilus ducreyi (strain 35000HP / ATCC 700724), this protein is Ribosomal RNA small subunit methyltransferase A.